Here is a 192-residue protein sequence, read N- to C-terminus: Fe/S biogenesis protein NfuA (192 aa).

C150 and C153 together coordinate [4Fe-4S] cluster.

It belongs to the NfuA family. Homodimer. Requires [4Fe-4S] cluster as cofactor.

In terms of biological role, involved in iron-sulfur cluster biogenesis. Binds a 4Fe-4S cluster, can transfer this cluster to apoproteins, and thereby intervenes in the maturation of Fe/S proteins. Could also act as a scaffold/chaperone for damaged Fe/S proteins. In Buchnera aphidicola subsp. Acyrthosiphon pisum (strain APS) (Acyrthosiphon pisum symbiotic bacterium), this protein is Fe/S biogenesis protein NfuA.